The chain runs to 281 residues: Nucleotide-binding protein Daro_0070 (281 aa).

8 to 15 (GLSGSGKS) lines the ATP pocket. 57–60 (DARS) serves as a coordination point for GTP.

It belongs to the RapZ-like family.

Displays ATPase and GTPase activities. In Dechloromonas aromatica (strain RCB), this protein is Nucleotide-binding protein Daro_0070.